The primary structure comprises 505 residues: Maturase K (505 aa).

This sequence belongs to the intron maturase 2 family. MatK subfamily.

The protein localises to the plastid. It localises to the chloroplast. Functionally, usually encoded in the trnK tRNA gene intron. Probably assists in splicing its own and other chloroplast group II introns. This chain is Maturase K, found in Morus indica (Mulberry).